We begin with the raw amino-acid sequence, 356 residues long: Phosphate acyltransferase (356 aa).

This sequence belongs to the PlsX family. Homodimer. Probably interacts with PlsY.

The protein localises to the cytoplasm. The catalysed reaction is a fatty acyl-[ACP] + phosphate = an acyl phosphate + holo-[ACP]. The protein operates within lipid metabolism; phospholipid metabolism. Catalyzes the reversible formation of acyl-phosphate (acyl-PO(4)) from acyl-[acyl-carrier-protein] (acyl-ACP). This enzyme utilizes acyl-ACP as fatty acyl donor, but not acyl-CoA. The protein is Phosphate acyltransferase of Escherichia coli (strain 55989 / EAEC).